A 421-amino-acid polypeptide reads, in one-letter code: Acetylglutamate kinase (421 aa).

An acetylglutamate kinase region spans residues 1-252; the sequence is MASTKEISQY…PLESSVSITR (252 aa). Substrate contacts are provided by residues 59 to 60, R81, and N170; that span reads AG. One can recognise an N-acetyltransferase domain in the interval 274–420; sequence ERVIRATTWK…HCAQHPPTLI (147 aa).

It in the N-terminal section; belongs to the acetylglutamate kinase family. ArgB subfamily.

It is found in the cytoplasm. It catalyses the reaction N-acetyl-L-glutamate + ATP = N-acetyl-L-glutamyl 5-phosphate + ADP. Its pathway is amino-acid biosynthesis; L-arginine biosynthesis; N(2)-acetyl-L-ornithine from L-glutamate: step 2/4. In Xylella fastidiosa (strain 9a5c), this protein is Acetylglutamate kinase (argB).